Consider the following 271-residue polypeptide: Pyrroline-5-carboxylate reductase (271 aa).

It belongs to the pyrroline-5-carboxylate reductase family.

The protein localises to the cytoplasm. The enzyme catalyses L-proline + NADP(+) = (S)-1-pyrroline-5-carboxylate + NADPH + 2 H(+). It catalyses the reaction L-proline + NAD(+) = (S)-1-pyrroline-5-carboxylate + NADH + 2 H(+). The protein operates within amino-acid biosynthesis; L-proline biosynthesis; L-proline from L-glutamate 5-semialdehyde: step 1/1. Catalyzes the reduction of 1-pyrroline-5-carboxylate (PCA) to L-proline. This chain is Pyrroline-5-carboxylate reductase, found in Staphylococcus epidermidis (strain ATCC 35984 / DSM 28319 / BCRC 17069 / CCUG 31568 / BM 3577 / RP62A).